A 399-amino-acid polypeptide reads, in one-letter code: Protochlorophyllide reductase, chloroplastic (399 aa).

Residues methionine 1–glutamate 64 constitute a chloroplast transit peptide.

This sequence belongs to the short-chain dehydrogenases/reductases (SDR) family. POR subfamily.

It is found in the plastid. The protein resides in the chloroplast. The catalysed reaction is chlorophyllide a + NADP(+) = protochlorophyllide a + NADPH + H(+). It participates in porphyrin-containing compound metabolism; chlorophyll biosynthesis. In terms of biological role, phototransformation of protochlorophyllide (Pchlide) to chlorophyllide (Chlide). The protein is Protochlorophyllide reductase, chloroplastic (3PCR) of Pisum sativum (Garden pea).